The sequence spans 83 residues: MSSGGLLLLLGLLTLWEVLTPVSSKDRPDLCELPADTGPCRVGFPSFYYNPDEKKCLEFIYGGCEGNANNFITKEECESTCAA.

The signal sequence occupies residues 1–24 (MSSGGLLLLLGLLTLWEVLTPVSS). The BPTI/Kunitz inhibitor domain maps to 31-81 (CELPADTGPCRVGFPSFYYNPDEKKCLEFIYGGCEGNANNFITKEECESTC). Intrachain disulfides connect C31-C81, C40-C64, and C56-C77.

The protein belongs to the venom Kunitz-type family. Expressed by the venom gland.

It localises to the secreted. Functionally, serine protease inhibitor. This Oxyuranus microlepidotus (Inland taipan) protein is Kunitz-type serine protease inhibitor microlepidin-1.